A 175-amino-acid polypeptide reads, in one-letter code: Crossover junction endodeoxyribonuclease RuvC (175 aa).

Catalysis depends on residues aspartate 8, glutamate 67, and aspartate 139. The Mg(2+) site is built by aspartate 8, glutamate 67, and aspartate 139.

It belongs to the RuvC family. As to quaternary structure, homodimer which binds Holliday junction (HJ) DNA. The HJ becomes 2-fold symmetrical on binding to RuvC with unstacked arms; it has a different conformation from HJ DNA in complex with RuvA. In the full resolvosome a probable DNA-RuvA(4)-RuvB(12)-RuvC(2) complex forms which resolves the HJ. It depends on Mg(2+) as a cofactor.

The protein resides in the cytoplasm. The catalysed reaction is Endonucleolytic cleavage at a junction such as a reciprocal single-stranded crossover between two homologous DNA duplexes (Holliday junction).. Functionally, the RuvA-RuvB-RuvC complex processes Holliday junction (HJ) DNA during genetic recombination and DNA repair. Endonuclease that resolves HJ intermediates. Cleaves cruciform DNA by making single-stranded nicks across the HJ at symmetrical positions within the homologous arms, yielding a 5'-phosphate and a 3'-hydroxyl group; requires a central core of homology in the junction. The consensus cleavage sequence is 5'-(A/T)TT(C/G)-3'. Cleavage occurs on the 3'-side of the TT dinucleotide at the point of strand exchange. HJ branch migration catalyzed by RuvA-RuvB allows RuvC to scan DNA until it finds its consensus sequence, where it cleaves and resolves the cruciform DNA. This chain is Crossover junction endodeoxyribonuclease RuvC, found in Marinobacter nauticus (strain ATCC 700491 / DSM 11845 / VT8) (Marinobacter aquaeolei).